Consider the following 68-residue polypeptide: uncharacterized protein (68 aa).

2 helical membrane-spanning segments follow: residues 1 to 21 (MLFIPPPLLCLFIAIAMYFLP) and 28 to 48 (VHFSVIVFVISLSFLIALSSV).

Its subcellular location is the cell membrane. This is an uncharacterized protein from Haemophilus influenzae (strain ATCC 51907 / DSM 11121 / KW20 / Rd).